The sequence spans 281 residues: NADPH-dependent 7-cyano-7-deazaguanine reductase (281 aa).

Residue Val-87–Ser-89 participates in substrate binding. Ser-89 to Lys-90 contacts NADPH. Cys-188 serves as the catalytic Thioimide intermediate. The Proton donor role is filled by Asp-195. His-227–Glu-228 contributes to the substrate binding site. Residue Arg-256 to Gly-257 coordinates NADPH.

It belongs to the GTP cyclohydrolase I family. QueF type 2 subfamily. Homodimer.

The protein localises to the cytoplasm. The enzyme catalyses 7-aminomethyl-7-carbaguanine + 2 NADP(+) = 7-cyano-7-deazaguanine + 2 NADPH + 3 H(+). The protein operates within tRNA modification; tRNA-queuosine biosynthesis. In terms of biological role, catalyzes the NADPH-dependent reduction of 7-cyano-7-deazaguanine (preQ0) to 7-aminomethyl-7-deazaguanine (preQ1). This chain is NADPH-dependent 7-cyano-7-deazaguanine reductase, found in Aliivibrio fischeri (strain MJ11) (Vibrio fischeri).